The chain runs to 398 residues: Thyrotropin-releasing hormone receptor (398 aa).

Over Met-1 to Thr-28 the chain is Extracellular. 2 N-linked (GlcNAc...) asparagine glycosylation sites follow: Asn-3 and Asn-10. The chain crosses the membrane as a helical span at residues Ile-29–Met-51. Residues Arg-52–Asn-61 are Cytoplasmic-facing. A helical transmembrane segment spans residues Cys-62 to Ile-83. The Extracellular segment spans residues Thr-84–Leu-99. Cys-98 and Cys-179 are joined by a disulfide. The helical transmembrane segment at Cys-100–Ile-121 threads the bilayer. At Glu-122–Lys-144 the chain is on the cytoplasmic side. The helical transmembrane segment at Ile-145–Ile-168 threads the bilayer. Over Ser-169–Leu-193 the chain is Extracellular. The helical transmembrane segment at Met-194–Ala-215 threads the bilayer. Residues Arg-216–Lys-266 are Cytoplasmic-facing. A helical transmembrane segment spans residues Met-267–Val-288. Topologically, residues Asn-289–Phe-296 are extracellular. The chain crosses the membrane as a helical span at residues Gln-297–Ile-319. Over Tyr-320–Ser-398 the chain is Cytoplasmic.

The protein belongs to the G-protein coupled receptor 1 family.

Its subcellular location is the cell membrane. Its function is as follows. Receptor for thyrotropin-releasing hormone (TRH). Upon ligand binding, this G-protein-coupled receptor triggers activation of the phosphatidylinositol (IP3)-calcium-protein kinase C (PKC) pathway. This Bos taurus (Bovine) protein is Thyrotropin-releasing hormone receptor (TRHR).